A 596-amino-acid chain; its full sequence is Aspartic proteinase MKC7 (596 aa).

The N-terminal stretch at 1–22 is a signal peptide; the sequence is MKLSVLTFVVDALLVCSSIVDA. Residues 23–65 constitute a propeptide that is removed on maturation; sequence GVTDFPSLPSNEVYVKMNFQKKYGSSFENALDDTKGRTRLMTR. One can recognise a Peptidase A1 domain in the interval 81-468; the sequence is YSVELDIGTP…DLDNMEISMA (388 aa). The active site involves D99. Residues N180, N190, N219, N229, N232, N286, and N346 are each glycosylated (N-linked (GlcNAc...) asparagine). D360 is a catalytic residue. N471 and N517 each carry an N-linked (GlcNAc...) asparagine glycan. The segment covering 530–570 has biased composition (low complexity); sequence ATSSSSSKGQKTQTSTTALSISKSTSSTSSTGMLSPTSSSS. Residues 530–578 form a disordered region; the sequence is ATSSSSSKGQKTQTSTTALSISKSTSSTSSTGMLSPTSSSSTRKENGGH. N575 carries GPI-anchor amidated asparagine lipidation. A propeptide spans 576–596 (removed in mature form); the sequence is GGHNLNPPFFARFITAIFHHI.

Belongs to the peptidase A1 family.

It localises to the cell membrane. It carries out the reaction Hydrolyzes various precursor proteins with Arg or Lys in P1, and commonly Arg or Lys also in P2. The P3 amino acid is usually non-polar, but otherwise additional basic amino acids are favorable in both non-prime and prime positions.. Its function is as follows. Cleaves proteins C-terminally to the most C-terminal basic residue. Can process the alpha-mating factor precursor. Required for cell wall integrity. The chain is Aspartic proteinase MKC7 (MKC7) from Saccharomyces cerevisiae (strain ATCC 204508 / S288c) (Baker's yeast).